A 139-amino-acid polypeptide reads, in one-letter code: Large ribosomal subunit protein bL20 (139 aa).

Belongs to the bacterial ribosomal protein bL20 family.

Its function is as follows. Binds directly to 23S ribosomal RNA and is necessary for the in vitro assembly process of the 50S ribosomal subunit. It is not involved in the protein synthesizing functions of that subunit. The polypeptide is Large ribosomal subunit protein bL20 (Leuconostoc citreum (strain KM20)).